A 195-amino-acid chain; its full sequence is Probable GTP-binding protein EngB (195 aa).

Residues 24–195 enclose the EngB-type G domain; it reads DIPEIALAGR…AAWDAILSKI (172 aa). GTP is bound by residues 32-39, 59-63, 77-80, 144-147, and 176-178; these read GRSNVGKS, GKTQL, DVPG, TKAD, and FSS. Mg(2+) contacts are provided by S39 and T61.

This sequence belongs to the TRAFAC class TrmE-Era-EngA-EngB-Septin-like GTPase superfamily. EngB GTPase family. Mg(2+) is required as a cofactor.

Its function is as follows. Necessary for normal cell division and for the maintenance of normal septation. In Streptococcus sanguinis (strain SK36), this protein is Probable GTP-binding protein EngB.